We begin with the raw amino-acid sequence, 475 residues long: MKLINTFATELPWACEPVAPQPLHAPALLHLNCALLGELGLVAVSEADWLACCGHGQPLPGMQPVAQVYAGHQFGGYSPRLGDGRALLLGEQQAPDGSRWDLHLKGAGKTPFSRFGDGRAVLRSSIREYLASEALHALGIPTTRALVLVGSQEPVYREQVETGATVLRTAPSHLRFGHVEYFAWSGQGERIPALIDYLLRHHFPELADGAELFAEVVRRTARLIAKWQAAGFCHGVMNTDNMSLLGLTLDYGPYGFIDAYVPDFVCNHSDPGGRYALDQQPAVGYWNLQKLAQALAGHVDGDALAEALAQYEHQLMLHYSELMRAKLGLAVWEEDDPVLFRELFQLLAAHGVDYHLFLRRLGEVTREGAWPASLLALLPEPAAWQGWLEAYRARLAREGSEDGVRKGLMDAVNPKYVLRNALAQRVIEAAEQGDMAPFERLFTALQHPYDEQPEYEELATPQPAWYCGGELSCSS.

The ATP site is built by glycine 82, glycine 84, arginine 85, lysine 105, aspartate 117, glycine 118, arginine 168, and arginine 175. Aspartate 240 serves as the catalytic Proton acceptor. Residues asparagine 241 and aspartate 250 each coordinate Mg(2+). Aspartate 250 contacts ATP.

This sequence belongs to the SELO family. The cofactor is Mg(2+). Mn(2+) serves as cofactor.

It carries out the reaction L-seryl-[protein] + ATP = 3-O-(5'-adenylyl)-L-seryl-[protein] + diphosphate. The catalysed reaction is L-threonyl-[protein] + ATP = 3-O-(5'-adenylyl)-L-threonyl-[protein] + diphosphate. The enzyme catalyses L-tyrosyl-[protein] + ATP = O-(5'-adenylyl)-L-tyrosyl-[protein] + diphosphate. It catalyses the reaction L-histidyl-[protein] + UTP = N(tele)-(5'-uridylyl)-L-histidyl-[protein] + diphosphate. It carries out the reaction L-seryl-[protein] + UTP = O-(5'-uridylyl)-L-seryl-[protein] + diphosphate. The catalysed reaction is L-tyrosyl-[protein] + UTP = O-(5'-uridylyl)-L-tyrosyl-[protein] + diphosphate. Nucleotidyltransferase involved in the post-translational modification of proteins. It can catalyze the addition of adenosine monophosphate (AMP) or uridine monophosphate (UMP) to a protein, resulting in modifications known as AMPylation and UMPylation. The chain is Protein nucleotidyltransferase YdiU from Aeromonas hydrophila subsp. hydrophila (strain ATCC 7966 / DSM 30187 / BCRC 13018 / CCUG 14551 / JCM 1027 / KCTC 2358 / NCIMB 9240 / NCTC 8049).